The sequence spans 174 residues: MQGIDVSYSDEVGFLTKGDRDWEDWIMQLLLMAKKEIGKDNAQEMSINFVDEDRSQAINRDYRDKDRPTDVISFAIEDGDDGLDLSMFTQDPDFTEDIGDLFMCPSVIERHSKEYGTGFDREFGYTIVHGYLHLNCYDHIEPDEAKEMFGIQGKVLEEYGLPLYPDQLDEGRGK.

His129, His133, and His139 together coordinate Zn(2+).

Belongs to the endoribonuclease YbeY family. Zn(2+) serves as cofactor.

It localises to the cytoplasm. In terms of biological role, single strand-specific metallo-endoribonuclease involved in late-stage 70S ribosome quality control and in maturation of the 3' terminus of the 16S rRNA. This is Endoribonuclease YbeY from Lactobacillus delbrueckii subsp. bulgaricus (strain ATCC 11842 / DSM 20081 / BCRC 10696 / JCM 1002 / NBRC 13953 / NCIMB 11778 / NCTC 12712 / WDCM 00102 / Lb 14).